The primary structure comprises 86 residues: uncharacterized protein (86 aa).

A helical transmembrane segment spans residues 12–32; that stretch reads IIFIFAIIIIVVLCVITYLYL.

The protein localises to the membrane. This is an uncharacterized protein from Escherichia coli (strain K12).